A 146-amino-acid polypeptide reads, in one-letter code: Ferredoxin-thioredoxin reductase catalytic chain, chloroplastic (146 aa).

The transit peptide at 1-31 (MNLQAVSCSFGFLSSPLGVTPRTSFRRFVIR) directs the protein to the chloroplast. [4Fe-4S] cluster is bound at residue cysteine 85. Cysteine 87 serves as the catalytic Nucleophile. Cysteine 87 and cysteine 117 form a disulfide bridge. [4Fe-4S] cluster is bound by residues cysteine 104, cysteine 106, and cysteine 115.

It belongs to the ferredoxin thioredoxin reductase beta subunit family. In terms of assembly, heterodimer of subunit A (variable subunit) and subunit B (catalytic subunit). Heterodimeric FTR forms a complex with ferredoxin and thioredoxin. The cofactor is [4Fe-4S] cluster.

Its subcellular location is the plastid. The protein localises to the chloroplast. It catalyses the reaction [thioredoxin]-disulfide + 2 reduced [2Fe-2S]-[ferredoxin] + 2 H(+) = [thioredoxin]-dithiol + 2 oxidized [2Fe-2S]-[ferredoxin]. Catalytic subunit of the ferredoxin-thioredoxin reductase (FTR), which catalyzes the two-electron reduction of thioredoxins by the electrons provided by reduced ferredoxin. This chain is Ferredoxin-thioredoxin reductase catalytic chain, chloroplastic, found in Arabidopsis thaliana (Mouse-ear cress).